The chain runs to 283 residues: Phosphatidylserine decarboxylase proenzyme (283 aa).

Active-site charge relay system; for autoendoproteolytic cleavage activity residues include Asp-88, His-145, and Ser-248. Ser-248 acts as the Schiff-base intermediate with substrate; via pyruvic acid; for decarboxylase activity in catalysis. Ser-248 carries the pyruvic acid (Ser); by autocatalysis modification.

This sequence belongs to the phosphatidylserine decarboxylase family. PSD-B subfamily. Prokaryotic type I sub-subfamily. As to quaternary structure, heterodimer of a large membrane-associated beta subunit and a small pyruvoyl-containing alpha subunit. It depends on pyruvate as a cofactor. Is synthesized initially as an inactive proenzyme. Formation of the active enzyme involves a self-maturation process in which the active site pyruvoyl group is generated from an internal serine residue via an autocatalytic post-translational modification. Two non-identical subunits are generated from the proenzyme in this reaction, and the pyruvate is formed at the N-terminus of the alpha chain, which is derived from the carboxyl end of the proenzyme. The autoendoproteolytic cleavage occurs by a canonical serine protease mechanism, in which the side chain hydroxyl group of the serine supplies its oxygen atom to form the C-terminus of the beta chain, while the remainder of the serine residue undergoes an oxidative deamination to produce ammonia and the pyruvoyl prosthetic group on the alpha chain. During this reaction, the Ser that is part of the protease active site of the proenzyme becomes the pyruvoyl prosthetic group, which constitutes an essential element of the active site of the mature decarboxylase.

It is found in the cell membrane. It carries out the reaction a 1,2-diacyl-sn-glycero-3-phospho-L-serine + H(+) = a 1,2-diacyl-sn-glycero-3-phosphoethanolamine + CO2. It participates in phospholipid metabolism; phosphatidylethanolamine biosynthesis; phosphatidylethanolamine from CDP-diacylglycerol: step 2/2. Functionally, catalyzes the formation of phosphatidylethanolamine (PtdEtn) from phosphatidylserine (PtdSer). The sequence is that of Phosphatidylserine decarboxylase proenzyme from Methylibium petroleiphilum (strain ATCC BAA-1232 / LMG 22953 / PM1).